A 227-amino-acid chain; its full sequence is Thymidylate synthase (227 aa).

DUMP is bound at residue 89-90 (RR). Residue Cys109 is the Nucleophile of the active site. Residues 129 to 132 (RSND), Asn140, and 170 to 172 (HVY) contribute to the dUMP site. Asp132 is a (6R)-5,10-methylene-5,6,7,8-tetrahydrofolate binding site.

The protein belongs to the thymidylate synthase family. Bacterial-type ThyA subfamily. In terms of assembly, homodimer.

It localises to the cytoplasm. The enzyme catalyses dUMP + (6R)-5,10-methylene-5,6,7,8-tetrahydrofolate = 7,8-dihydrofolate + dTMP. It functions in the pathway pyrimidine metabolism; dTTP biosynthesis. Catalyzes the reductive methylation of 2'-deoxyuridine-5'-monophosphate (dUMP) to 2'-deoxythymidine-5'-monophosphate (dTMP) while utilizing 5,10-methylenetetrahydrofolate (mTHF) as the methyl donor and reductant in the reaction, yielding dihydrofolate (DHF) as a by-product. This enzymatic reaction provides an intracellular de novo source of dTMP, an essential precursor for DNA biosynthesis. In Bacillus atrophaeus, this protein is Thymidylate synthase.